The primary structure comprises 460 residues: MMARLKVPEGWCVQAFRFTLNPTQTQAASLARHFGARRKAFNWTVTALKADIKAWRADGTESAKPSLRVLRKRWNTVKDQVCVNAQTGQVWWPECSKEAYADGIAGAVDAYWNWQSCRAGKRAGKTVGVPRFKKKGRDADRVCFTTGAMRVEPDRRHLTLPVIGTIRTYENTRRVERLIAKGRARVLAITVRRNGTRLDASVRVLVQRPQQRRVALPDSRVGVDVGVRRLATVADAEGTVLEQVPNPRPLDAALRGLRRVSRARSRCTKGSRRYCERTTELSRLHRRVNDVRTHHLHVLTTRLAKTHGRIVVEGLDAAGMLRQKGLPGARARRRALSDAALATPRRHLSYKTGWYGSSLVVADRWFPSSKTCHACRHVQDIGWDEKWQCDGCSITHQRDDNAAINLARYEEPPSVVGPVGAAVKRGADRKTGPGPAGGREARKATGHPAGEQPRDGVQVK.

Catalysis depends on residues Asp-224 and Glu-313. Zn(2+)-binding residues include Cys-372, Cys-375, Cys-389, and Cys-392. Asp-399 is an active-site residue. The segment at 415-460 (VVGPVGAAVKRGADRKTGPGPAGGREARKATGHPAGEQPRDGVQVK) is disordered.

This sequence in the N-terminal section; belongs to the transposase 2 family. The protein in the C-terminal section; belongs to the transposase 35 family.

Functionally, an RNA-guided dsDNA endonuclease. When guided by an RNA derived from the right-end element of its insertion sequence element (IS), cleaves DNA downstream of the transposon-associated motif (TAM). Cleaves supercoiled and linear DNA in a staggered manner 15-21 bases from the TAM yielding 5'-overhangs. Binds reRNA, an approximately 150 nucleotide base sRNA derived from the 3' end of its own gene, the right end (RE) of the insertion sequence (IS) plus sequence downstream of the IS. The protein is Putative RNA-guided DNA endonuclease MT2953 of Mycobacterium tuberculosis (strain CDC 1551 / Oshkosh).